A 265-amino-acid polypeptide reads, in one-letter code: Undecaprenyl-diphosphatase (265 aa).

7 helical membrane passes run 42–62 (AATFDVVIQLGAIMAVVVLYW), 82–102 (GIVLLMLTSLPACILGLLLHA), 108–128 (LFRPATVLIALVVGAICMILV), 157–177 (LALWPGFSRSAATIMGGMLLG), 181–201 (PLAAEYSFIAAVPIMVAATGY), 217–237 (FFLVGMIGSFVSALLAVKVFV), and 244–264 (TLIPFACYRLLIAPFVYYFMV).

It belongs to the UppP family.

The protein resides in the cell inner membrane. The enzyme catalyses di-trans,octa-cis-undecaprenyl diphosphate + H2O = di-trans,octa-cis-undecaprenyl phosphate + phosphate + H(+). In terms of biological role, catalyzes the dephosphorylation of undecaprenyl diphosphate (UPP). Confers resistance to bacitracin. This chain is Undecaprenyl-diphosphatase, found in Desulfovibrio desulfuricans (strain ATCC 27774 / DSM 6949 / MB).